The sequence spans 256 residues: Kallikrein-15 (256 aa).

The first 16 residues, 1–16, serve as a signal peptide directing secretion; that stretch reads MWLLLTLSFLLASTAA. The propeptide at 17 to 21 is activation peptide; sequence QDGDK. A Peptidase S1 domain is found at 22 to 254; sequence LLEGDECAPH…YLEWIRETMK (233 aa). Cys-47 and Cys-63 are joined by a disulfide. Active-site charge relay system residues include His-62 and Asp-106. 3 disulfides stabilise this stretch: Cys-138–Cys-215, Cys-180–Cys-194, and Cys-205–Cys-230. N-linked (GlcNAc...) asparagine glycosylation occurs at Asn-171. Ser-209 (charge relay system) is an active-site residue. The N-linked (GlcNAc...) asparagine glycan is linked to Asn-232.

The protein belongs to the peptidase S1 family. Kallikrein subfamily. Highest expression in the thyroid gland. Also expressed in the prostate, salivary, and adrenal glands and in the colon testis and kidney.

It localises to the secreted. Its function is as follows. Protease whose physiological substrate is not yet known. The protein is Kallikrein-15 (KLK15) of Homo sapiens (Human).